Reading from the N-terminus, the 957-residue chain is Glutamyl aminopeptidase (957 aa).

Topologically, residues 1 to 18 (MNFAEREGSKRYCIQTKH) are cytoplasmic. Residues 19–39 (VAILCAVVVGVGLIVGLAVGL) traverse the membrane as a helical; Signal-anchor for type II membrane protein segment. The Extracellular segment spans residues 40-957 (TRSCDSSGDG…EWFFNLLESG (918 aa)). The interval 44-83 (DSSGDGGPGTAPAPSHLPSSTASPSGPPAQDQDICPASED) is disordered. N-linked (GlcNAc...) asparagine; atypical glycosylation is present at Asn-98. N-linked (GlcNAc...) asparagine glycosylation is found at Asn-124 and Asn-197. Glu-223 is a substrate binding site. Residues Asn-324 and Asn-340 are each glycosylated (N-linked (GlcNAc...) asparagine). 357–361 (GAMEN) lines the substrate pocket. His-393 provides a ligand contact to Zn(2+). The active-site Proton acceptor is the Glu-394. Zn(2+) is bound by residues His-397 and Glu-416. Asn-554, Asn-589, Asn-597, Asn-607, Asn-678, Asn-763, Asn-773, Asn-801, and Asn-828 each carry an N-linked (GlcNAc...) asparagine glycan. Arg-887 serves as a coordination point for substrate.

It belongs to the peptidase M1 family. In terms of assembly, homodimer; disulfide-linked. It depends on Zn(2+) as a cofactor. In terms of tissue distribution, expressed in choriocarcinoma cancer cell lines (at protein level). Expressed by epithelial cells of the proximal tubule cells and the glomerulus of the nephron. Also found in a variety of other tissues.

The protein resides in the cell membrane. It catalyses the reaction Release of N-terminal glutamate (and to a lesser extent aspartate) from a peptide.. Its activity is regulated as follows. Substrate specificity is modulated by calcium which enhances the enzymatic activity for cleavage of acidic residues while reducing its activity with basic residues. Inhibited by aminopeptidase inhibitors amastatin and bestatin. In terms of biological role, regulates central hypertension through its calcium-modulated preference to cleave N-terminal acidic residues from peptides such as angiotensin II. In Homo sapiens (Human), this protein is Glutamyl aminopeptidase (ENPEP).